The following is a 268-amino-acid chain: Tryptophan synthase alpha chain (268 aa).

Residues Glu49 and Asp60 each act as proton acceptor in the active site.

This sequence belongs to the TrpA family. In terms of assembly, tetramer of two alpha and two beta chains.

It catalyses the reaction (1S,2R)-1-C-(indol-3-yl)glycerol 3-phosphate + L-serine = D-glyceraldehyde 3-phosphate + L-tryptophan + H2O. The protein operates within amino-acid biosynthesis; L-tryptophan biosynthesis; L-tryptophan from chorismate: step 5/5. Its function is as follows. The alpha subunit is responsible for the aldol cleavage of indoleglycerol phosphate to indole and glyceraldehyde 3-phosphate. The protein is Tryptophan synthase alpha chain of Xanthomonas axonopodis pv. citri (strain 306).